A 440-amino-acid chain; its full sequence is Glutamate--tRNA ligase 2 (440 aa).

Residues 8-18 (PSPTGYLHVGN) carry the 'HIGH' region motif. Positions 239 to 243 (ALSKR) match the 'KMSKS' region motif. Residue K242 participates in ATP binding.

It belongs to the class-I aminoacyl-tRNA synthetase family. Glutamate--tRNA ligase type 1 subfamily. Monomer.

The protein resides in the cytoplasm. It carries out the reaction tRNA(Glu) + L-glutamate + ATP = L-glutamyl-tRNA(Glu) + AMP + diphosphate. In terms of biological role, catalyzes the attachment of glutamate to tRNA(Glu) in a two-step reaction: glutamate is first activated by ATP to form Glu-AMP and then transferred to the acceptor end of tRNA(Glu). The chain is Glutamate--tRNA ligase 2 from Dinoroseobacter shibae (strain DSM 16493 / NCIMB 14021 / DFL 12).